Consider the following 391-residue polypeptide: Phosphoglycerate kinase (391 aa).

Substrate is bound by residues 21–23, Arg36, 59–62, Arg113, and Arg146; these read DLN and HLGR. ATP is bound by residues Lys197, Glu319, and 345–348; that span reads GGDT.

The protein belongs to the phosphoglycerate kinase family. In terms of assembly, monomer.

The protein localises to the cytoplasm. The enzyme catalyses (2R)-3-phosphoglycerate + ATP = (2R)-3-phospho-glyceroyl phosphate + ADP. The protein operates within carbohydrate degradation; glycolysis; pyruvate from D-glyceraldehyde 3-phosphate: step 2/5. This is Phosphoglycerate kinase from Shewanella halifaxensis (strain HAW-EB4).